Here is a 106-residue protein sequence, read N- to C-terminus: Tripartite terminase subunit 2 (106 aa).

The protein belongs to the herpesviridae TRM2 protein family. As to quaternary structure, associates with TRM1 and TRM3 to form the tripartite terminase complex.

The protein resides in the host nucleus. Its function is as follows. Component of the molecular motor that translocates viral genomic DNA in empty capsid during DNA packaging. Forms a tripartite terminase complex together with TRM1 and TRM3 in the host cytoplasm. Once the complex reaches the host nucleus, it interacts with the capsid portal vertex. This portal forms a ring in which genomic DNA is translocated into the capsid. The polypeptide is Tripartite terminase subunit 2 (Human herpesvirus 6A (strain Uganda-1102) (HHV-6 variant A)).